A 270-amino-acid polypeptide reads, in one-letter code: Aliphatic sulfonates import ATP-binding protein SsuB (270 aa).

Positions 17 to 238 (LAANDLRRTF…VRGSHRLAAL (222 aa)) constitute an ABC transporter domain. 49-56 (GRSGCGKS) provides a ligand contact to ATP. Positions 250-270 (PGTPPEPEPVAPLPTHLRWAH) are disordered. Pro residues predominate over residues 251–261 (GTPPEPEPVAP).

This sequence belongs to the ABC transporter superfamily. Aliphatic sulfonates importer (TC 3.A.1.17.2) family. As to quaternary structure, the complex is composed of two ATP-binding proteins (SsuB), two transmembrane proteins (SsuC) and a solute-binding protein (SsuA).

It localises to the cell inner membrane. It carries out the reaction ATP + H2O + aliphatic sulfonate-[sulfonate-binding protein]Side 1 = ADP + phosphate + aliphatic sulfonateSide 2 + [sulfonate-binding protein]Side 1.. In terms of biological role, part of the ABC transporter complex SsuABC involved in aliphatic sulfonates import. Responsible for energy coupling to the transport system. The polypeptide is Aliphatic sulfonates import ATP-binding protein SsuB (Pseudomonas entomophila (strain L48)).